Here is a 666-residue protein sequence, read N- to C-terminus: tRNA 5-methylaminomethyl-2-thiouridine biosynthesis bifunctional protein MnmC (666 aa).

The tract at residues 1–245 is tRNA (mnm(5)s(2)U34)-methyltransferase; the sequence is MKQYAIQPAT…KREMLCGVME (245 aa). Positions 270 to 666 are FAD-dependent cmnm(5)s(2)U34 oxidoreductase; sequence IGGGIASALL…RKLLKGKAVK (397 aa).

In the N-terminal section; belongs to the methyltransferase superfamily. tRNA (mnm(5)s(2)U34)-methyltransferase family. This sequence in the C-terminal section; belongs to the DAO family. Requires FAD as cofactor.

The protein localises to the cytoplasm. The enzyme catalyses 5-aminomethyl-2-thiouridine(34) in tRNA + S-adenosyl-L-methionine = 5-methylaminomethyl-2-thiouridine(34) in tRNA + S-adenosyl-L-homocysteine + H(+). In terms of biological role, catalyzes the last two steps in the biosynthesis of 5-methylaminomethyl-2-thiouridine (mnm(5)s(2)U) at the wobble position (U34) in tRNA. Catalyzes the FAD-dependent demodification of cmnm(5)s(2)U34 to nm(5)s(2)U34, followed by the transfer of a methyl group from S-adenosyl-L-methionine to nm(5)s(2)U34, to form mnm(5)s(2)U34. This chain is tRNA 5-methylaminomethyl-2-thiouridine biosynthesis bifunctional protein MnmC, found in Salmonella choleraesuis (strain SC-B67).